A 527-amino-acid chain; its full sequence is Ankyrin repeat domain-containing protein 42 (527 aa).

Positions Met1–Phe27 are disordered. Over residues Ser12–Ser21 the composition is skewed to basic and acidic residues. 10 ANK repeats span residues Val25–Glu54, His59–Gln88, Arg92–Thr121, Arg125–Val154, Arg158–Asp187, Asn191–Gln220, Asn228–His257, Asp263–Glu293, Asn297–Ile326, and Ala330–Asp360. A coiled-coil region spans residues Asn395–Ser484.

This Mus musculus (Mouse) protein is Ankyrin repeat domain-containing protein 42 (Ankrd42).